A 144-amino-acid chain; its full sequence is Interleukin-9 (144 aa).

An N-terminal signal peptide occupies residues 1-18 (MLVTYILASVLLFSSVLG). Glutamine 19 carries the post-translational modification Pyrrolidone carboxylic acid. Asparagine 50, asparagine 78, asparagine 101, and asparagine 114 each carry an N-linked (GlcNAc...) asparagine glycan.

This sequence belongs to the IL-7/IL-9 family. In terms of assembly, interacts with IL9R. Interacts with IL2RG.

It localises to the secreted. Functionally, multifunctional cytokine secreted mainly by T-helper 2 lymphocytes and also mast cells or NKT cells that plays important roles in the immune response against parasites. Affects intestinal epithelial permeability and adaptive immunity. In addition, induces the differentiation of specific T-cell subsets such as IL-17 producing helper T-cells (TH17) and also proliferation and differentiation of mast cells. Mechanistically, exerts its biological effects through a receptor composed of IL9R subunit and a signal transducing subunit IL2RG. Receptor stimulation results in the rapid activation of JAK1 and JAK3 kinase activities leading to STAT1, STAT3 and STAT5-mediated transcriptional programs. Induction of differentiation genes seems to be mediated by STAT1 alone, while protection of cells from apoptosis depends on STAT3 and STAT5. In Mus musculus (Mouse), this protein is Interleukin-9 (Il9).